The following is a 354-amino-acid chain: Protein-arginine kinase (354 aa).

Residues 24–254 (IVLSSRIRLA…QQIIQQEKMA (231 aa)) enclose the Phosphagen kinase C-terminal domain. ATP is bound by residues 27–31 (SSRIR), H92, R125, 176–180 (RASVM), and 207–212 (RGIYGE). The RDXXRA motif of the pArg binding pocket involved in allosteric regulation signature appears at 337–342 (RDYRRA).

It belongs to the ATP:guanido phosphotransferase family.

It catalyses the reaction L-arginyl-[protein] + ATP = N(omega)-phospho-L-arginyl-[protein] + ADP + H(+). Appears to be allosterically activated by the binding of pArg-containing polypeptides to the pArg-binding pocket localized in the C-terminal domain of McsB. Its function is as follows. Catalyzes the specific phosphorylation of arginine residues in a large number of proteins. Is part of the bacterial stress response system. Protein arginine phosphorylation has a physiologically important role and is involved in the regulation of many critical cellular processes, such as protein homeostasis, motility, competence, and stringent and stress responses, by regulating gene expression and protein activity. The polypeptide is Protein-arginine kinase (Bacillus cereus (strain G9842)).